We begin with the raw amino-acid sequence, 2754 residues long: Neurobeachin-like protein 2 (2754 aa).

2 disordered regions span residues 1298–1338 (TAGS…SEAP) and 1364–1438 (SVGS…QQTS). Composition is skewed to pro residues over residues 1301 to 1323 (SPPP…PPTE) and 1388 to 1400 (TPSP…PFPA). The span at 1425–1437 (GDDTSNTSNPQQT) shows a compositional bias: polar residues. Phosphoserine is present on S1647. Position 1867 is a phosphothreonine (T1867). The region spanning 1915-2040 (EQREKLVLSA…VRNQVYSWLL (126 aa)) is the BEACH-type PH domain. A BEACH domain is found at 2053–2345 (RSPQEMLRAS…QLLKEPHPTR (293 aa)). 7 WD repeats span residues 2386–2424 (LVLA…SWLP), 2448–2491 (RLLS…ALPR), 2494–2531 (LLSQ…VWRL), 2544–2582 (KPVQ…IHTV), 2589–2631 (AALR…TYSL), 2639–2674 (KLRA…ILQL), and 2682–2717 (PPLP…VVAG). A phosphoserine mark is found at S2739 and S2742.

It belongs to the WD repeat neurobeachin family. Expressed in megakaryocytes.

It is found in the endoplasmic reticulum. Functionally, probably involved in thrombopoiesis. Plays a role in the development or secretion of alpha-granules, that contain several growth factors important for platelet biogenesis. This chain is Neurobeachin-like protein 2 (NBEAL2), found in Homo sapiens (Human).